Consider the following 102-residue polypeptide: Hypersensitivity to hygromycin-B protein 1 (102 aa).

An N-terminal signal peptide occupies residues 1–17 (MSLSFLLFSPFLPPCFS). The chain crosses the membrane as a helical span at residues 18–38 (SISICLSVLSTVSFFFAFTIP). The Cytoplasmic portion of the chain corresponds to 39–69 (HYVLRCGSVDEWHIHSSAEDFRTQRCVCAVK). A helical membrane pass occupies residues 70–90 (LSASLLGCLLACASWSLLLEV). Residues 91 to 102 (SRIKWHVGTAYS) are Extracellular-facing.

It is found in the membrane. In terms of biological role, involved in vacuolar trafficking. This Saccharomyces cerevisiae (strain ATCC 204508 / S288c) (Baker's yeast) protein is Hypersensitivity to hygromycin-B protein 1.